Reading from the N-terminus, the 196-residue chain is Acyl-homoserine-lactone synthase (196 aa).

The protein belongs to the autoinducer synthase family.

The enzyme catalyses a fatty acyl-[ACP] + S-adenosyl-L-methionine = an N-acyl-L-homoserine lactone + S-methyl-5'-thioadenosine + holo-[ACP] + H(+). Its function is as follows. Required for the synthesis of a yet unknown N-aceyl-homoserine lactone (N-aceyl-HSL), an autoinducer molecule which binds to PhzR and thus regulates phenazine production. The protein is Acyl-homoserine-lactone synthase (phzI) of Pseudomonas chlororaphis (Pseudomonas aureofaciens).